The primary structure comprises 677 residues: Protein windpipe (677 aa).

The first 20 residues, 1–20 (MERVHLTAWLALFLIVVANA), serve as a signal peptide directing secretion. Topologically, residues 21 to 451 (TPTPARTPTG…IGKPKDDSSA (431 aa)) are extracellular. 2 N-linked (GlcNAc...) asparagine glycosylation sites follow: N53 and N80. 4 LRR repeats span residues 91–116 (LPELTSADLSHNQLKDLGHLGKGLKR), 118–133 (NLKHNQLTSDKLRKLP), 134–156 (QHLQVLNLQHNNITHLPLELTHM), and 158–183 (QLHQLELSHNAINCSCQTLEVRNWLV). N-linked (GlcNAc...) asparagine glycosylation is found at N145 and N170. Residues 184-216 (ERIVYMEHPVVCSYPLEFRGRSWLQLKQDEICK) enclose the LRRCT domain. 3 disordered regions span residues 264 to 285 (AKKVRSPQIPLPSDQVEGSGDL), 298 to 317 (TVAEPEAAESQLVDAAASPS), and 325 to 385 (KDED…TVFS). The span at 347-372 (SKVKITSEDDIDSDGKPEESDVRPLE) shows a compositional bias: basic and acidic residues. The span at 374–385 (PENSENPDTVFS) shows a compositional bias: polar residues. Residues 452 to 472 (IYYLLAVIGLIVVGLVLFVAI) form a helical membrane-spanning segment. The Cytoplasmic portion of the chain corresponds to 473–677 (KRCKYDSNAA…EPTHQVINGH (205 aa)). 2 disordered regions span residues 502–523 (LGKPLHKNGHGNGQEHSPLIGE) and 539–677 (NGEA…INGH). Residues 595 to 607 (AQQQQLAEQNNNE) show a composition bias toward low complexity.

Interacts with dome; the interaction promotes internalization of dome and its subsequent lysosomal degradation. As to expression, in adult intestine, expressed in both small progenitor cells and large nuclei enterocytes (at protein level). During embryogenesis, restricted to the developing trachea.

The protein resides in the cell membrane. Its function is as follows. Plays a role in negative regulation of the JAK/STAT pathway by binding to the receptor dome and promoting its internalization for subsequent lysosomal degradation, thereby reducing JAK/STAT signaling. The protein is Protein windpipe of Drosophila melanogaster (Fruit fly).